We begin with the raw amino-acid sequence, 109 residues long: Flagellar transcriptional regulator FlhD (109 aa).

It belongs to the FlhD family. Homodimer; disulfide-linked. Forms a heterohexamer composed of two FlhC and four FlhD subunits. Each FlhC binds a FlhD dimer, forming a heterotrimer, and a hexamer assembles by dimerization of two heterotrimers.

The protein resides in the cytoplasm. Functions in complex with FlhC as a master transcriptional regulator that regulates transcription of several flagellar and non-flagellar operons by binding to their promoter region. Activates expression of class 2 flagellar genes, including fliA, which is a flagellum-specific sigma factor that turns on the class 3 genes. Also regulates genes whose products function in a variety of physiological pathways. The chain is Flagellar transcriptional regulator FlhD from Acidovorax sp. (strain JS42).